Consider the following 262-residue polypeptide: Cytochrome c oxidase subunit 3 (262 aa).

The next 6 helical transmembrane spans lie at 39–59 (YTMT…YQWW), 83–103 (GMIL…WAFF), 120–140 (VGIA…ILLA), 163–183 (GLFF…YEYI), 201–221 (ATGF…ICFL), and 240–260 (AWYW…IYWW).

Belongs to the cytochrome c oxidase subunit 3 family. As to quaternary structure, component of the cytochrome c oxidase (complex IV, CIV), a multisubunit enzyme composed of a catalytic core of 3 subunits and several supernumerary subunits. The complex exists as a monomer or a dimer and forms supercomplexes (SCs) in the inner mitochondrial membrane with ubiquinol-cytochrome c oxidoreductase (cytochrome b-c1 complex, complex III, CIII).

It is found in the mitochondrion inner membrane. It carries out the reaction 4 Fe(II)-[cytochrome c] + O2 + 8 H(+)(in) = 4 Fe(III)-[cytochrome c] + 2 H2O + 4 H(+)(out). Its function is as follows. Component of the cytochrome c oxidase, the last enzyme in the mitochondrial electron transport chain which drives oxidative phosphorylation. The respiratory chain contains 3 multisubunit complexes succinate dehydrogenase (complex II, CII), ubiquinol-cytochrome c oxidoreductase (cytochrome b-c1 complex, complex III, CIII) and cytochrome c oxidase (complex IV, CIV), that cooperate to transfer electrons derived from NADH and succinate to molecular oxygen, creating an electrochemical gradient over the inner membrane that drives transmembrane transport and the ATP synthase. Cytochrome c oxidase is the component of the respiratory chain that catalyzes the reduction of oxygen to water. Electrons originating from reduced cytochrome c in the intermembrane space (IMS) are transferred via the dinuclear copper A center (CU(A)) of subunit 2 and heme A of subunit 1 to the active site in subunit 1, a binuclear center (BNC) formed by heme A3 and copper B (CU(B)). The BNC reduces molecular oxygen to 2 water molecules using 4 electrons from cytochrome c in the IMS and 4 protons from the mitochondrial matrix. In Anopheles gambiae (African malaria mosquito), this protein is Cytochrome c oxidase subunit 3 (COIII).